Here is a 142-residue protein sequence, read N- to C-terminus: MFMGEFQHNIDSKGRLIVPARFREGLGDRFIVTKGLDNCLFVYPQHEWAEVEQKLKSLPFTRADARAFVRFFFSGATECEVDKQGRILLPNNLREYAKLDKETVVVGVSTRVEIWSKEEWDRYNAQAEASFEQLAENIVDLL.

SpoVT-AbrB domains lie at Glu-5–Glu-47 and Ala-76–Glu-119.

Belongs to the MraZ family. In terms of assembly, forms oligomers.

The protein resides in the cytoplasm. The protein localises to the nucleoid. In Desulforamulus reducens (strain ATCC BAA-1160 / DSM 100696 / MI-1) (Desulfotomaculum reducens), this protein is Transcriptional regulator MraZ.